Reading from the N-terminus, the 868-residue chain is Thiol protease/hemagglutinin PrtT (868 aa).

The N-terminal stretch at M1 to K27 is a signal peptide. Active-site residues include C184 and H327.

Belongs to the peptidase C10 family.

Its function is as follows. Appears to be specific for arginine-containing peptide bonds. Possesses hemagglutinin activity. The protein is Thiol protease/hemagglutinin PrtT (prtT) of Porphyromonas gingivalis (Bacteroides gingivalis).